Reading from the N-terminus, the 874-residue chain is Alanine--tRNA ligase (874 aa).

Residues His-562, His-566, Cys-664, and His-668 each coordinate Zn(2+).

Belongs to the class-II aminoacyl-tRNA synthetase family. Requires Zn(2+) as cofactor.

Its subcellular location is the cytoplasm. It carries out the reaction tRNA(Ala) + L-alanine + ATP = L-alanyl-tRNA(Ala) + AMP + diphosphate. In terms of biological role, catalyzes the attachment of alanine to tRNA(Ala) in a two-step reaction: alanine is first activated by ATP to form Ala-AMP and then transferred to the acceptor end of tRNA(Ala). Also edits incorrectly charged Ser-tRNA(Ala) and Gly-tRNA(Ala) via its editing domain. The protein is Alanine--tRNA ligase of Shewanella woodyi (strain ATCC 51908 / MS32).